Here is a 267-residue protein sequence, read N- to C-terminus: Acetyl-coenzyme A carboxylase carboxyl transferase subunit beta 1 (267 aa).

The CoA carboxyltransferase N-terminal domain occupies 9-267; it reads TWQACPKCGR…NYGIGRSAHG (259 aa). Positions 13, 16, 31, and 34 each coordinate Zn(2+). The C4-type zinc finger occupies 13–34; that stretch reads CPKCGRHVHQRQWGTYQQCPYC.

The protein belongs to the AccD/PCCB family. In terms of assembly, acetyl-CoA carboxylase is a heterohexamer composed of biotin carboxyl carrier protein (AccB), biotin carboxylase (AccC) and two subunits each of ACCase subunit alpha (AccA) and ACCase subunit beta (AccD). Zn(2+) is required as a cofactor.

The protein resides in the cytoplasm. The enzyme catalyses N(6)-carboxybiotinyl-L-lysyl-[protein] + acetyl-CoA = N(6)-biotinyl-L-lysyl-[protein] + malonyl-CoA. Its pathway is lipid metabolism; malonyl-CoA biosynthesis; malonyl-CoA from acetyl-CoA: step 1/1. Component of the acetyl coenzyme A carboxylase (ACC) complex. Biotin carboxylase (BC) catalyzes the carboxylation of biotin on its carrier protein (BCCP) and then the CO(2) group is transferred by the transcarboxylase to acetyl-CoA to form malonyl-CoA. The polypeptide is Acetyl-coenzyme A carboxylase carboxyl transferase subunit beta 1 (Lactiplantibacillus plantarum (strain ATCC BAA-793 / NCIMB 8826 / WCFS1) (Lactobacillus plantarum)).